The primary structure comprises 335 residues: MIDAKSEHKIAPWKIEEVNALKELLKSTSIIALIDMMEVPAVQLQEIRDKIRDQMTLKMSRNTLMKRAIEEVAEETGNPEFAKLADYLDKGAAIIATEMNPFKLFKTLDESKSPAPVKGGATAPCDIEVKAGSTGMPPGPFLSELKAVGIPAAIDKGKIGIKEDKVVIKEGEVVSQKLAVVLSALGIKPVTVGLNVLGVYEDGVIYTESELRIDEEEFIGKIQKAYTSAFNLSVNAVIPTSATVETIVQKAFNDAKAVSVESAFVTDKTADAILGKAYAQMIAVAGLASDDALDEELKEKISSGAAAPVEEAPVEEKKEEKKEEAAPAAGLGMLF.

A disordered region spans residues 304–335 (GAAAPVEEAPVEEKKEEKKEEAAPAAGLGMLF). A compositionally biased stretch (basic and acidic residues) spans 314-325 (VEEKKEEKKEEA).

The protein belongs to the universal ribosomal protein uL10 family. In terms of assembly, part of the 50S ribosomal subunit. Forms part of the ribosomal stalk which helps the ribosome interact with GTP-bound translation factors. Forms a heptameric L10(L12)2(L12)2(L12)2 complex, where L10 forms an elongated spine to which the L12 dimers bind in a sequential fashion.

In terms of biological role, forms part of the ribosomal stalk, playing a central role in the interaction of the ribosome with GTP-bound translation factors. This chain is Large ribosomal subunit protein uL10, found in Methanococcus maripaludis (strain C6 / ATCC BAA-1332).